A 530-amino-acid polypeptide reads, in one-letter code: Bifunctional purine biosynthesis protein PurH (530 aa).

The 148-residue stretch at 1–148 (MNNARPIRRA…KNHKDVTIVV (148 aa)) folds into the MGS-like domain.

Belongs to the PurH family.

The enzyme catalyses (6R)-10-formyltetrahydrofolate + 5-amino-1-(5-phospho-beta-D-ribosyl)imidazole-4-carboxamide = 5-formamido-1-(5-phospho-D-ribosyl)imidazole-4-carboxamide + (6S)-5,6,7,8-tetrahydrofolate. The catalysed reaction is IMP + H2O = 5-formamido-1-(5-phospho-D-ribosyl)imidazole-4-carboxamide. Its pathway is purine metabolism; IMP biosynthesis via de novo pathway; 5-formamido-1-(5-phospho-D-ribosyl)imidazole-4-carboxamide from 5-amino-1-(5-phospho-D-ribosyl)imidazole-4-carboxamide (10-formyl THF route): step 1/1. It functions in the pathway purine metabolism; IMP biosynthesis via de novo pathway; IMP from 5-formamido-1-(5-phospho-D-ribosyl)imidazole-4-carboxamide: step 1/1. This chain is Bifunctional purine biosynthesis protein PurH, found in Vibrio atlanticus (strain LGP32) (Vibrio splendidus (strain Mel32)).